The sequence spans 296 residues: Stanniocalcin-2 (296 aa).

Residues 1 to 24 (MCAERLGQFVTLALVFATLDPAQG) form the signal peptide. The interval 21 to 44 (PAQGTDSTNPPEGPQDRSSQQKGR) is disordered. The segment covering 24 to 44 (GTDSTNPPEGPQDRSSQQKGR) has biased composition (polar residues). Residue asparagine 73 is glycosylated (N-linked (GlcNAc...) asparagine). A disordered region spans residues 218–296 (PPTAAPEHQP…EQSEYSDIRR (79 aa)). The segment covering 240-258 (RDTDHHLTANRGAKGERGS) has biased composition (basic and acidic residues). Over residues 272-282 (GQSAQGPSGSS) the composition is skewed to low complexity.

This sequence belongs to the stanniocalcin family. As to quaternary structure, homodimer; disulfide-linked. Found in a variety of tissues including skeletal muscle, small intestine, kidney, liver and brain.

Its subcellular location is the secreted. Its function is as follows. Has an anti-hypocalcemic action on calcium and phosphate homeostasis. The protein is Stanniocalcin-2 (Stc2) of Mus musculus (Mouse).